Reading from the N-terminus, the 383-residue chain is Chaperone protein DnaJ (383 aa).

A J domain is found at 5–70 (DYYKTLGVTQ…KKRTAYDQYG (66 aa)). A CR-type zinc finger spans residues 137-215 (GTIKEIKIPT…CHGNGRIEIS (79 aa)). The Zn(2+) site is built by cysteine 150, cysteine 153, cysteine 167, cysteine 170, cysteine 189, cysteine 192, cysteine 203, and cysteine 206. CXXCXGXG motif repeat units lie at residues 150–157 (CPTCYGYG), 167–174 (CPTCRGNG), 189–196 (CPQCHGEG), and 203–210 (CRRCHGNG).

It belongs to the DnaJ family. As to quaternary structure, homodimer. Zn(2+) serves as cofactor.

The protein resides in the cytoplasm. Functionally, participates actively in the response to hyperosmotic and heat shock by preventing the aggregation of stress-denatured proteins and by disaggregating proteins, also in an autonomous, DnaK-independent fashion. Unfolded proteins bind initially to DnaJ; upon interaction with the DnaJ-bound protein, DnaK hydrolyzes its bound ATP, resulting in the formation of a stable complex. GrpE releases ADP from DnaK; ATP binding to DnaK triggers the release of the substrate protein, thus completing the reaction cycle. Several rounds of ATP-dependent interactions between DnaJ, DnaK and GrpE are required for fully efficient folding. Also involved, together with DnaK and GrpE, in the DNA replication of plasmids through activation of initiation proteins. The chain is Chaperone protein DnaJ from Buchnera aphidicola subsp. Baizongia pistaciae (strain Bp).